A 289-amino-acid polypeptide reads, in one-letter code: ATP synthase gamma chain (289 aa).

This sequence belongs to the ATPase gamma chain family. As to quaternary structure, F-type ATPases have 2 components, CF(1) - the catalytic core - and CF(0) - the membrane proton channel. CF(1) has five subunits: alpha(3), beta(3), gamma(1), delta(1), epsilon(1). CF(0) has three main subunits: a, b and c.

Its subcellular location is the cell inner membrane. Its function is as follows. Produces ATP from ADP in the presence of a proton gradient across the membrane. The gamma chain is believed to be important in regulating ATPase activity and the flow of protons through the CF(0) complex. This is ATP synthase gamma chain from Haemophilus influenzae (strain PittEE).